The sequence spans 217 residues: Putative thymidylate synthase (217 aa).

The active site involves cysteine 139.

Belongs to the thymidylate synthase family. Archaeal-type ThyA subfamily. In terms of assembly, monomer.

The protein localises to the cytoplasm. The protein operates within pyrimidine metabolism; dTTP biosynthesis. Functionally, may catalyze the biosynthesis of dTMP using an unknown cosubstrate. This chain is Putative thymidylate synthase, found in Methanosarcina acetivorans (strain ATCC 35395 / DSM 2834 / JCM 12185 / C2A).